The sequence spans 123 residues: Small ribosomal subunit protein uS12 (123 aa).

The residue at position 89 (Asp89) is a 3-methylthioaspartic acid.

Belongs to the universal ribosomal protein uS12 family. Part of the 30S ribosomal subunit. Contacts proteins S8 and S17. May interact with IF1 in the 30S initiation complex.

With S4 and S5 plays an important role in translational accuracy. In terms of biological role, interacts with and stabilizes bases of the 16S rRNA that are involved in tRNA selection in the A site and with the mRNA backbone. Located at the interface of the 30S and 50S subunits, it traverses the body of the 30S subunit contacting proteins on the other side and probably holding the rRNA structure together. The combined cluster of proteins S8, S12 and S17 appears to hold together the shoulder and platform of the 30S subunit. In Nitrobacter winogradskyi (strain ATCC 25391 / DSM 10237 / CIP 104748 / NCIMB 11846 / Nb-255), this protein is Small ribosomal subunit protein uS12.